The primary structure comprises 426 residues: Gamma-glutamylputrescine oxidoreductase (426 aa).

It belongs to the gamma-glutamylputrescine oxidoreductase family.

The catalysed reaction is gamma-L-glutamylputrescine + O2 + H2O = 4-(gamma-L-glutamylamino)butanal + H2O2 + NH4(+). It functions in the pathway amine and polyamine degradation; putrescine degradation; 4-aminobutanoate from putrescine: step 2/4. Functionally, involved in the breakdown of putrescine via the oxidation of L-glutamylputrescine. This Escherichia coli (strain K12) protein is Gamma-glutamylputrescine oxidoreductase (puuB).